The following is a 131-amino-acid chain: Large ribosomal subunit protein bL12 (131 aa).

This sequence belongs to the bacterial ribosomal protein bL12 family. In terms of assembly, homodimer. Part of the ribosomal stalk of the 50S ribosomal subunit. Forms a multimeric L10(L12)X complex, where L10 forms an elongated spine to which 2 to 4 L12 dimers bind in a sequential fashion. Binds GTP-bound translation factors.

In terms of biological role, forms part of the ribosomal stalk which helps the ribosome interact with GTP-bound translation factors. Is thus essential for accurate translation. This is Large ribosomal subunit protein bL12 from Prochlorococcus marinus (strain MIT 9301).